A 115-amino-acid polypeptide reads, in one-letter code: uncharacterized protein (115 aa).

The 91-residue stretch at 1–91 (MTEYNANSIR…SELEGFKNVS (91 aa)) folds into the HTH arsR-type domain. Positions 30-53 (ASLISHTLLLSYATVLRHLRILND) form a DNA-binding region, H-T-H motif.

Its function is as follows. Essential for virus function. This is an uncharacterized protein from Saccharolobus solfataricus (Sulfolobus solfataricus).